The sequence spans 451 residues: Phosphoglucosamine mutase (451 aa).

The Phosphoserine intermediate role is filled by serine 103. Residues serine 103, aspartate 243, aspartate 245, and aspartate 247 each contribute to the Mg(2+) site. Serine 103 bears the Phosphoserine mark.

It belongs to the phosphohexose mutase family. Mg(2+) is required as a cofactor. Activated by phosphorylation.

It catalyses the reaction alpha-D-glucosamine 1-phosphate = D-glucosamine 6-phosphate. Functionally, catalyzes the conversion of glucosamine-6-phosphate to glucosamine-1-phosphate. The sequence is that of Phosphoglucosamine mutase from Lactobacillus johnsonii (strain CNCM I-12250 / La1 / NCC 533).